The sequence spans 262 residues: MTRIHPTAIVEPGAQIDESVEIGPYAIVGPHVTIGARTTIGSHSVIEGHTTLGEDNRIGHYASVGGRPQDMKYKAEPTKLVIGNRNTIREFTTIHTGTVQDVGVTTLGDDNWIMAYVHIGHDCRVGNNVILSSNAQMAGHVEIGDYAIIGGMSGVHQFVRIGAHSMLGGASALVQDVPPFVIAAGNKAEPHGINVEGLRRRGFSPDAISALRSAYRLLYKNGLSLEEAKVQLRELAVAGGEGDAAVTAFVEFIDASQRGIIR.

Belongs to the transferase hexapeptide repeat family. LpxA subfamily. In terms of assembly, homotrimer.

The protein localises to the cytoplasm. It carries out the reaction a (3R)-hydroxyacyl-[ACP] + UDP-N-acetyl-alpha-D-glucosamine = a UDP-3-O-[(3R)-3-hydroxyacyl]-N-acetyl-alpha-D-glucosamine + holo-[ACP]. It functions in the pathway glycolipid biosynthesis; lipid IV(A) biosynthesis; lipid IV(A) from (3R)-3-hydroxytetradecanoyl-[acyl-carrier-protein] and UDP-N-acetyl-alpha-D-glucosamine: step 1/6. In terms of biological role, involved in the biosynthesis of lipid A, a phosphorylated glycolipid that anchors the lipopolysaccharide to the outer membrane of the cell. The protein is Acyl-[acyl-carrier-protein]--UDP-N-acetylglucosamine O-acyltransferase of Burkholderia ambifaria (strain ATCC BAA-244 / DSM 16087 / CCUG 44356 / LMG 19182 / AMMD) (Burkholderia cepacia (strain AMMD)).